Here is a 338-residue protein sequence, read N- to C-terminus: MKTAFARDPFTAPATGTYGTIYASRSLPRLSISKFLEDANPEIYELSRYEALGTNRPSSGKRAMQPAVSKPALLETVFTLDIWYRRTNNQNIGNLRDSVSRFLSDDRVREAVMVRLDLDIVVQLKEYWLIVKDKEAQTFADRLAFDSHLFVNRGENANYDLVTQTFIPSDTFLKDNFKTEALKKLLLSVQSHTGLDAGLQGDSSKATYNIGLGQYLEDEALLYRQGVALQQMAFAELELARGAEKEAFPSTFDLSNRPACNLILKRTCKWYQQTFKAEERKEFAKSLWVDDFAEANWNTGNLSFGFSTTLNVIERWRLTRFYVHMYSSVHIYSQKASG.

It localises to the virion. Plays an important role in virus transmission by the insect vector. May participate in the virus stability by binding clamp proteins and surrounding the pentameric turrets present in the virion. This is Structural protein VP9 from Rice ragged stunt virus (isolate Thailand) (RRSV).